A 413-amino-acid polypeptide reads, in one-letter code: Eukaryotic initiation factor 4A-10 (413 aa).

Residues 40-68 (DSFDAMGLQENLLRGIYAYGFEKPSAIQQ) carry the Q motif motif. A Helicase ATP-binding domain is found at 71 to 241 (IVPFCKGLDV…RKFMNKPVRI (171 aa)). ATP is bound at residue 84 to 91 (AQSGTGKT). The DEAD box motif lies at 189–192 (DEAD). The Helicase C-terminal domain maps to 252–413 (GIKQFYVNVD…ELPANVADLL (162 aa)).

It belongs to the DEAD box helicase family. eIF4A subfamily. As to quaternary structure, eIF4F is a multi-subunit complex, the composition of which varies with external and internal environmental conditions. It is composed of at least EIF4A, EIF4E and EIF4G.

The catalysed reaction is ATP + H2O = ADP + phosphate + H(+). ATP-dependent RNA helicase which is a subunit of the eIF4F complex involved in cap recognition and is required for mRNA binding to ribosome. In the current model of translation initiation, eIF4A unwinds RNA secondary structures in the 5'-UTR of mRNAs which is necessary to allow efficient binding of the small ribosomal subunit, and subsequent scanning for the initiator codon. The polypeptide is Eukaryotic initiation factor 4A-10 (Nicotiana tabacum (Common tobacco)).